Consider the following 204-residue polypeptide: FMN-dependent NADH:quinone oxidoreductase 1 (204 aa).

FMN is bound by residues S14, 20 to 22 (SMS), and 99 to 102 (MYNF).

It belongs to the azoreductase type 1 family. In terms of assembly, homodimer. FMN serves as cofactor.

It catalyses the reaction 2 a quinone + NADH + H(+) = 2 a 1,4-benzosemiquinone + NAD(+). The catalysed reaction is N,N-dimethyl-1,4-phenylenediamine + anthranilate + 2 NAD(+) = 2-(4-dimethylaminophenyl)diazenylbenzoate + 2 NADH + 2 H(+). Quinone reductase that provides resistance to thiol-specific stress caused by electrophilic quinones. Functionally, also exhibits azoreductase activity. Catalyzes the reductive cleavage of the azo bond in aromatic azo compounds to the corresponding amines. This is FMN-dependent NADH:quinone oxidoreductase 1 from Hahella chejuensis (strain KCTC 2396).